A 463-amino-acid polypeptide reads, in one-letter code: MSTGTVVQVIGAVVDVEFPQDAVPQVYDALKIVGEGPCNGLVLEVQQQLGGGVVRTIAMGSSDGLRRGLEVVNSGSPITVPVGTATLGRIMNVLGEPIDEAGPIGEEERYVIHRTAPSYEDQSSSTELLETGIKVIDLVCPFAKGGKVGLFGGAGVGKTVNMMELINNIAKAHSGLSVFAGVGERTREGNDFYYEMKDSGVLDKVAMVYGQMNEPPGNRLRVALSGLTMAEKFRDEGRDVLLFVDNIYRYTLAGTEVSALLGRMPSAVGYQPTLAEEMGVLQERITSTKTGSITSVQAVYVPADDLTDPSPATTFAHLDATVVLSRQIASLGIYPAVDPLDSTSRQLDPLVVGQEHYDVANGVQTVLQRYKELKDIIAILGMDELSDEDKTTVFRARKIERFLSQPFFVAEVFTGSPGKYVSLKDTIRGFKGILNGEFDHLPEQAFYMVGSIDEVIEKANKKK.

152 to 159 is a binding site for ATP; sequence GGAGVGKT.

The protein belongs to the ATPase alpha/beta chains family. F-type ATPases have 2 components, CF(1) - the catalytic core - and CF(0) - the membrane proton channel. CF(1) has five subunits: alpha(3), beta(3), gamma(1), delta(1), epsilon(1). CF(0) has three main subunits: a(1), b(2) and c(9-12). The alpha and beta chains form an alternating ring which encloses part of the gamma chain. CF(1) is attached to CF(0) by a central stalk formed by the gamma and epsilon chains, while a peripheral stalk is formed by the delta and b chains.

It is found in the cell inner membrane. The enzyme catalyses ATP + H2O + 4 H(+)(in) = ADP + phosphate + 5 H(+)(out). Its function is as follows. Produces ATP from ADP in the presence of a proton gradient across the membrane. The catalytic sites are hosted primarily by the beta subunits. This is ATP synthase subunit beta from Shewanella baltica (strain OS223).